Reading from the N-terminus, the 430-residue chain is Adenylosuccinate synthetase (430 aa).

Residues 12–18 and 40–42 contribute to the GTP site; these read GDEGKGK and GHT. The Proton acceptor role is filled by Asp-13. Residues Asp-13 and Gly-40 each coordinate Mg(2+). Residues 13-16, 38-41, Thr-130, Arg-144, Gln-224, Thr-239, and Arg-303 contribute to the IMP site; these read DEGK and NAGH. The active-site Proton donor is the His-41. Residue 299–305 participates in substrate binding; it reads VVTGRKR. GTP is bound by residues Arg-305, 331 to 333, and 413 to 415; these read KLD and STS.

It belongs to the adenylosuccinate synthetase family. As to quaternary structure, homodimer. It depends on Mg(2+) as a cofactor.

It is found in the cytoplasm. The catalysed reaction is IMP + L-aspartate + GTP = N(6)-(1,2-dicarboxyethyl)-AMP + GDP + phosphate + 2 H(+). It participates in purine metabolism; AMP biosynthesis via de novo pathway; AMP from IMP: step 1/2. Functionally, plays an important role in the de novo pathway of purine nucleotide biosynthesis. Catalyzes the first committed step in the biosynthesis of AMP from IMP. This is Adenylosuccinate synthetase from Methylobacterium sp. (strain 4-46).